We begin with the raw amino-acid sequence, 237 residues long: Protein lin-31 (237 aa).

Residues 12–103 constitute a DNA-binding region (fork-head); sequence QKPPYSYIWL…SGMFENGSCL (92 aa). Disordered regions lie at residues 110–141 and 195–237; these read RARG…LLPE and NFES…ILSS. Low complexity-rich tracts occupy residues 206 to 216 and 227 to 237; these read SEISGSGSSSS and SSFSIESILSS.

It localises to the nucleus. In terms of biological role, lin-31 regulates how vulval precursor cells choose their fate. It helps specify three alternative cell fates in vulval development. In Caenorhabditis elegans, this protein is Protein lin-31 (lin-31).